Here is a 655-residue protein sequence, read N- to C-terminus: Hepatocyte growth factor activator serine protease (655 aa).

The N-terminal stretch at 1 to 35 is a signal peptide; that stretch reads MGRWAWVPSPWPPPGLGPFLLLLLLLLLLPRGFQP. A propeptide spans 36–372 (removed in mature form); that stretch reads QPGGNRTESP…RLEACESLTR (337 aa). N-linked (GlcNAc...) asparagine glycosylation is found at N40 and N48. The interval 64-102 is disordered; sequence TSETPATSAPEAEGPQSGGLPPPPRAVPSSSSPQAQALT. The Fibronectin type-II domain maps to 103–150; the sequence is EDGRPCRFPFRYGGRMLHACTSEGSAHRKWCATTHNYDRDRAWGYCVE. 19 cysteine pairs are disulfide-bonded: C108–C133, C122–C148, C164–C175, C169–C186, C188–C197, C202–C230, C228–C237, C245–C256, C250–C267, C269–C278, C286–C367, C307–C349, C338–C362, C394–C521, C432–C448, C440–C510, C535–C604, C567–C583, and C594–C622. The EGF-like 1 domain maps to 160–198; sequence ALDPCASGPCLNGGSCSNTQDPQSYHCSCPRAFTGKDCG. The Fibronectin type-I domain occupies 200–240; it reads EKCFDETRYEYLEGGDRWARVRQGHVEQCECFGGRTWCEGT. Positions 241–279 constitute an EGF-like 2 domain; it reads RHTACLSSPCLNGGTCHLIVATGTTVCACPPGFAGRLCN. A Kringle domain is found at 286–367; that stretch reads CFLGNGTGYR…SWEYCRLEAC (82 aa). The N-linked (GlcNAc...) asparagine glycan is linked to N290. The region spanning 408–646 is the Peptidase S1 domain; it reads IIGGSSSLPG…YVDWINDRIR (239 aa). H447 acts as the Charge relay system in catalysis. 2 N-linked (GlcNAc...) asparagine glycosylation sites follow: N468 and N492. D497 (charge relay system) is an active-site residue. An N-linked (GlcNAc...) asparagine glycan is attached at N546. S598 acts as the Charge relay system in catalysis.

This sequence belongs to the peptidase S1 family. Heterodimer of a short chain and a long chain linked by a disulfide bond. In terms of processing, the active form of HGFAC presents in the serum is derived from the COOH-terminal region of the precursor by the cleavage of bonds between Arg-372 and Val-373 and Arg-407 and Ile-408. As to expression, liver.

It is found in the secreted. Functionally, serine protease that hydrolyzes the inactive zymogen hepatocyte growth factor (HGFsc) to an activated disulfide-linked heterodimer, then initiating hepatocyte growth factor receptor signaling pathway. In Homo sapiens (Human), this protein is Hepatocyte growth factor activator serine protease.